The primary structure comprises 609 residues: ATP-dependent lipid A-core flippase (609 aa).

6 helical membrane-spanning segments follow: residues 47 to 67 (LLAA…IYLI), 88 to 108 (ILML…VGSF), 167 to 187 (AIIT…VMFV), 190 to 210 (WQLS…ISII), 279 to 299 (VIQI…AIFG), and 305 to 325 (GSSW…AAIL). Residues 47–340 (LLAAIGSIFF…LTKVNVVIQK (294 aa)) form the ABC transmembrane type-1 domain. The ABC transporter domain maps to 372 to 606 (VTIKDLSFAF…GGLYTRLYQS (235 aa)). 404-411 (GKSGSGKT) is a binding site for ATP.

This sequence belongs to the ABC transporter superfamily. Lipid exporter (TC 3.A.1.106) family. As to quaternary structure, homodimer.

The protein resides in the cell inner membrane. The catalysed reaction is ATP + H2O + lipid A-core oligosaccharideSide 1 = ADP + phosphate + lipid A-core oligosaccharideSide 2.. Involved in lipopolysaccharide (LPS) biosynthesis. Translocates lipid A-core from the inner to the outer leaflet of the inner membrane. Transmembrane domains (TMD) form a pore in the inner membrane and the ATP-binding domain (NBD) is responsible for energy generation. This chain is ATP-dependent lipid A-core flippase, found in Francisella tularensis subsp. tularensis (strain FSC 198).